Reading from the N-terminus, the 375-residue chain is Trans-enoyl reductase iccB (375 aa).

48–51 (VDAK) is an NADP(+) binding site. 143–150 (AAVATVGL) serves as a coordination point for substrate. Residues 204–207 (SSAS), tyrosine 222, and 269–270 (LD) contribute to the NADP(+) site. Residue 289–293 (TYSQF) participates in substrate binding. NADP(+) is bound at residue 358–359 (IK).

Belongs to the zinc-containing alcohol dehydrogenase family. Monomer.

The catalysed reaction is N-[(4E,6E,10S,12Z,14E)-6,10-dimethyl-3-oxohexadeca-4,6,12,14-tetraenoyl]-L-tyrosyl-[ACP] = (3E,5S)-3-[(2E,4E,8S,10E,12Z)-1-hydroxy-4,8-dimethyltetradeca-2,4,10,12-tetraen-1-ylidene]-5-[(4-hydroxyphenyl)methyl]pyrrolidine-2,4-dione + holo-[ACP] + H(+). It functions in the pathway mycotoxin biosynthesis. Trans-enoyl reductase; part of the gene cluster that mediates the biosynthesis of ilicicolin H, a 4-hydroxy-2-pyridonealkaloid that has potent and broad antifungal activities by inhibiting the mitochondrial respiration chain. IccB collaborates with the hybrid PKS-NRPS synthetase iccA to assemble the backbone of ilicicolin H. The PKS portion of iccA and trans-acting enoyl reductase iccB work together to construct an octaketide, and two methyl groups are introduced by the MT domain of iccA during the chain assembly. The nascent chain is then condensed with tyrosine, catalyzed by the iliA C domain, and the resulting PKS-NRPS hybrid is offloaded by the iliA RED domain to form an advanced tetramic acid intermediate. The biosynthesis of ilicicolin H starts with formation of the tetramic acid by the hybrid PKS-NRPS synthetase iccA with the partnering trans-enoyl reductase iccB since iccA lacks a designated enoylreductase (ER) domain. The cytochrome P450 monooxygenase iccC then catalyzes the ring expansion of the tetramate to the acyclic 2-pyridone. The pericyclase iccD further converts the acyclic 2-pyridone into 8-epi-ilicicolin H. Finally, the epimerase iccE converts 8-epi-ilicicolin H into ilicicolin H via epimerization. IccA to iccE are sufficient for ilicicolin H biosynthesis and the roles of the remaining enzymes, iccF, iccG and iccH within the pathway have still to be determined. In Talaromyces variabilis (Penicillium variabile), this protein is Trans-enoyl reductase iccB.